We begin with the raw amino-acid sequence, 115 residues long: NAD(P)H-quinone oxidoreductase subunit M (115 aa).

The protein belongs to the complex I NdhM subunit family. In terms of assembly, NDH-1 can be composed of about 15 different subunits; different subcomplexes with different compositions have been identified which probably have different functions.

The protein localises to the cellular thylakoid membrane. It catalyses the reaction a plastoquinone + NADH + (n+1) H(+)(in) = a plastoquinol + NAD(+) + n H(+)(out). It carries out the reaction a plastoquinone + NADPH + (n+1) H(+)(in) = a plastoquinol + NADP(+) + n H(+)(out). NDH-1 shuttles electrons from an unknown electron donor, via FMN and iron-sulfur (Fe-S) centers, to quinones in the respiratory and/or the photosynthetic chain. The immediate electron acceptor for the enzyme in this species is believed to be plastoquinone. Couples the redox reaction to proton translocation, and thus conserves the redox energy in a proton gradient. Cyanobacterial NDH-1 also plays a role in inorganic carbon-concentration. This is NAD(P)H-quinone oxidoreductase subunit M from Prochlorococcus marinus (strain MIT 9215).